Here is a 490-residue protein sequence, read N- to C-terminus: Betaine aldehyde dehydrogenase (490 aa).

The K(+) site is built by Thr26 and Asp93. 150–152 (GAW) is an NAD(+) binding site. The active-site Charge relay system is the Lys162. Position 176 to 179 (176 to 179 (KPSE)) interacts with NAD(+). Residue Val180 participates in K(+) binding. 230-233 (GVAT) lines the NAD(+) pocket. A K(+)-binding site is contributed by Leu246. The active-site Proton acceptor is Glu252. NAD(+) contacts are provided by Gly254, Cys286, and Glu387. Cys286 functions as the Nucleophile in the catalytic mechanism. Position 286 is a cysteine sulfenic acid (-SOH) (Cys286). Residues Lys457 and Gly460 each contribute to the K(+) site. Residue Glu464 is the Charge relay system of the active site.

The protein belongs to the aldehyde dehydrogenase family. As to quaternary structure, dimer of dimers. It depends on K(+) as a cofactor.

The catalysed reaction is betaine aldehyde + NAD(+) + H2O = glycine betaine + NADH + 2 H(+). It participates in amine and polyamine biosynthesis; betaine biosynthesis via choline pathway; betaine from betaine aldehyde: step 1/1. Functionally, involved in the biosynthesis of the osmoprotectant glycine betaine. Catalyzes the irreversible oxidation of betaine aldehyde to the corresponding acid. The polypeptide is Betaine aldehyde dehydrogenase (Stenotrophomonas maltophilia (strain R551-3)).